Consider the following 927-residue polypeptide: Probable UDP-N-acetylglucosamine--peptide N-acetylglucosaminyltransferase SPINDLY (927 aa).

A disordered region spans residues 1–31 (MGRPGMDSSEGRESNGVVPERNGGAVPAKQQ). 11 TPR repeats span residues 34–67 (GKDT…DEAN), 68–101 (VEAL…DPGN), 102–135 (ACAL…DPSY), 143–176 (AIVL…DSHY), 177–210 (APAY…RPLY), 211–244 (AEAY…SPNF), 252–285 (AIAL…NWHY), 286–319 (ADAM…NPRC), 320–353 (AEAC…KPNF), 355–387 (QSLN…NSTY), and 388–421 (AEAY…DPDS). Residues 422-927 (RNAGQNRLLA…KVEANGHISR (506 aa)) form a catalytic region region.

This sequence belongs to the glycosyltransferase 41 family. O-GlcNAc transferase subfamily.

The protein resides in the nucleus. It carries out the reaction L-seryl-[protein] + UDP-N-acetyl-alpha-D-glucosamine = 3-O-(N-acetyl-beta-D-glucosaminyl)-L-seryl-[protein] + UDP + H(+). It catalyses the reaction L-threonyl-[protein] + UDP-N-acetyl-alpha-D-glucosamine = 3-O-(N-acetyl-beta-D-glucosaminyl)-L-threonyl-[protein] + UDP + H(+). It functions in the pathway protein modification; protein glycosylation. In terms of biological role, probable O-linked N-acetylglucosamine transferase (OGT) involved in various processes such as gibberellin (GA) signaling pathway. OGTs catalyze the addition of nucleotide-activated sugars directly onto the polypeptide through O-glycosidic linkage with the hydroxyl of serine or threonine. Probably acts by adding O-linked sugars to yet unknown proteins. The chain is Probable UDP-N-acetylglucosamine--peptide N-acetylglucosaminyltransferase SPINDLY (SPY) from Oryza sativa subsp. japonica (Rice).